Consider the following 950-residue polypeptide: Serine/threonine-protein kinase atg1 (950 aa).

The Protein kinase domain occupies 6–311; the sequence is YTRLDEIGRG…FPDFFENGVI (306 aa). Residues 12–20 and Lys-35 each bind ATP; that span reads IGRGSFATV. Asp-149 (proton acceptor) is an active-site residue. Disordered regions lie at residues 314-425, 443-467, 505-570, 671-690, and 926-950; these read PIPG…HATA, RQRG…LREE, QGGI…QSPT, VQTD…NPDS, and PTPS…TPPK. 3 stretches are compositionally biased toward polar residues: residues 370–389, 447–458, and 511–520; these read GLTQ…PTTT, RNTFSEGSPQTD, and GAQTGALSRR. Basic and acidic residues predominate over residues 549–565; sequence SRADSMHNRQSSYERRY.

Belongs to the protein kinase superfamily. Ser/Thr protein kinase family. APG1/unc-51/ULK1 subfamily. In terms of assembly, homodimer. Forms a ternary complex with ATG13 and ATG17.

It localises to the cytoplasm. The protein localises to the preautophagosomal structure membrane. The enzyme catalyses L-seryl-[protein] + ATP = O-phospho-L-seryl-[protein] + ADP + H(+). It catalyses the reaction L-threonyl-[protein] + ATP = O-phospho-L-threonyl-[protein] + ADP + H(+). In terms of biological role, serine/threonine protein kinase involved in the cytoplasm to vacuole transport (Cvt) and found to be essential in autophagy, where it is required for the formation of autophagosomes. Involved in the clearance of protein aggregates which cannot be efficiently cleared by the proteasome. Required for selective autophagic degradation of the nucleus (nucleophagy) as well as for mitophagy which contributes to regulate mitochondrial quantity and quality by eliminating the mitochondria to a basal level to fulfill cellular energy requirements and preventing excess ROS production. Also involved in endoplasmic reticulum-specific autophagic process, in selective removal of ER-associated degradation (ERAD) substrates. Plays a key role in ATG9 and ATG23 cycling through the pre-autophagosomal structure and is necessary to promote ATG18 binding to ATG9 through phosphorylation of ATG9. Catalyzes phosphorylation of ATG4, decreasing the interaction between ATG4 and ATG8 and impairing deconjugation of PE-conjugated forms of ATG8. The sequence is that of Serine/threonine-protein kinase atg1 from Neosartorya fischeri (strain ATCC 1020 / DSM 3700 / CBS 544.65 / FGSC A1164 / JCM 1740 / NRRL 181 / WB 181) (Aspergillus fischerianus).